Consider the following 333-residue polypeptide: Glycogenin-1 (333 aa).

Thr-2 carries the post-translational modification N-acetylthreonine. UDP-binding residues include Leu-9, Thr-11, Asn-12, and Tyr-15. The UDP-alpha-D-glucose site is built by Leu-9, Thr-11, Asn-12, and Tyr-15. A Phosphoserine; by PKA; in vitro modification is found at Ser-44. Residue Arg-77 participates in UDP binding. UDP-alpha-D-glucose is bound by residues Arg-77, Lys-86, Asp-102, Ala-103, Asp-104, Asn-133, Ser-134, Asp-160, Asp-163, and Gln-164. Positions 102, 103, and 104 each coordinate UDP. Asp-102 provides a ligand contact to Mn(2+). Mn(2+) is bound at residue Asp-104. Tyr-195 carries O-linked (Glc...) tyrosine glycosylation. UDP is bound by residues His-212, Gly-215, and Lys-218. Residue His-212 coordinates Mn(2+). UDP-alpha-D-glucose-binding residues include Gly-215 and Lys-218. An interaction with GYS1 region spans residues 284–316 (SHLSLGETPATTQPFVSSEERKERWEQGQADYM).

Belongs to the glycosyltransferase 8 family. Glycogenin subfamily. In terms of assembly, part of the GYS1-GYG1 complex, a heterooctamer composed of a tetramer of GYS1 and 2 dimers of GYG1, where each GYS1 protomer binds to one GYG1 subunit (via GYG1 C-terminus); the GYS1 tetramer may dissociate from GYG1 dimers to continue glycogen polymerization on its own. May also form a heterooctamer complex with GYS2 (via GYG1 C-terminus). It depends on Mn(2+) as a cofactor. In terms of processing, self-glycosylated by the transfer of glucose residues from UDP-glucose to itself, forming an alpha-1,4-glycan of around 10 residues attached to Tyr-195. Post-translationally, phosphorylated. In terms of tissue distribution, detected in heart, skeletal muscle, brain and testis, and at lower levels in kidney.

Its subcellular location is the cytoplasm. The protein resides in the nucleus. The enzyme catalyses L-tyrosyl-[glycogenin] + UDP-alpha-D-glucose = alpha-D-glucosyl-L-tyrosyl-[glycogenin] + UDP + H(+). The catalysed reaction is [1,4-alpha-D-glucosyl](n)-L-tyrosyl-[glycogenin] + UDP-alpha-D-glucose = [1,4-alpha-D-glucosyl](n+1)-L-tyrosyl-[glycogenin] + UDP + H(+). Its pathway is glycan biosynthesis; glycogen biosynthesis. Glycogenin participates in the glycogen biosynthetic process along with glycogen synthase and glycogen branching enzyme. It catalyzes the formation of a short alpha (1,4)-glucosyl chain covalently attached via a glucose 1-O-tyrosyl linkage to internal tyrosine residues and these chains act as primers for the elongation reaction catalyzed by glycogen synthase. The chain is Glycogenin-1 (GYG1) from Oryctolagus cuniculus (Rabbit).